Reading from the N-terminus, the 178-residue chain is MATRLQKALTEVGNHTTGNLNSLKIKTVAHGAKVTGSDIDNFMLVELGFDAEGNRTASKLSDKTKKAYLIASPEARYLGESMRDFYNGVGEHARIVILEPAYTRFDVSAFSFNTGVTEVKQGQVAHFDIATQKYILSDPTSPHEDYADSSAKFLVVNNEDDLVYTMGQKLVRLEVIEA.

The protein is SPbeta prophage-derived uncharacterized protein YonC (yonC) of Bacillus subtilis (strain 168).